The primary structure comprises 100 residues: MHLSPQEKDKLLIVTAALLAERRLNRGLKLNHPEAVAWLGFLVLEGARDGKSVAELMQEGTTWLRQDQVMEGVPELVHEVQIEAVFPDGTKLVTLHDPIR.

Belongs to the urease gamma subunit family. In terms of assembly, heterotrimer of UreA (gamma), UreB (beta) and UreC (alpha) subunits. Three heterotrimers associate to form the active enzyme.

The protein resides in the cytoplasm. It catalyses the reaction urea + 2 H2O + H(+) = hydrogencarbonate + 2 NH4(+). Its pathway is nitrogen metabolism; urea degradation; CO(2) and NH(3) from urea (urease route): step 1/1. This chain is Urease subunit gamma, found in Parasynechococcus marenigrum (strain WH8102).